The sequence spans 370 residues: UDP-N-acetylglucosamine--N-acetylmuramyl-(pentapeptide) pyrophosphoryl-undecaprenol N-acetylglucosamine transferase (370 aa).

Residues 10–12 (TGG), Asn124, Ser196, Ile253, and Gln298 contribute to the UDP-N-acetyl-alpha-D-glucosamine site.

This sequence belongs to the glycosyltransferase 28 family. MurG subfamily.

Its subcellular location is the cell membrane. The catalysed reaction is Mur2Ac(oyl-L-Ala-gamma-D-Glu-L-Lys-D-Ala-D-Ala)-di-trans,octa-cis-undecaprenyl diphosphate + UDP-N-acetyl-alpha-D-glucosamine = beta-D-GlcNAc-(1-&gt;4)-Mur2Ac(oyl-L-Ala-gamma-D-Glu-L-Lys-D-Ala-D-Ala)-di-trans,octa-cis-undecaprenyl diphosphate + UDP + H(+). It participates in cell wall biogenesis; peptidoglycan biosynthesis. Its function is as follows. Cell wall formation. Catalyzes the transfer of a GlcNAc subunit on undecaprenyl-pyrophosphoryl-MurNAc-pentapeptide (lipid intermediate I) to form undecaprenyl-pyrophosphoryl-MurNAc-(pentapeptide)GlcNAc (lipid intermediate II). The sequence is that of UDP-N-acetylglucosamine--N-acetylmuramyl-(pentapeptide) pyrophosphoryl-undecaprenol N-acetylglucosamine transferase from Limosilactobacillus reuteri subsp. reuteri (strain JCM 1112) (Lactobacillus reuteri).